Reading from the N-terminus, the 539-residue chain is Glucose-6-phosphate isomerase (539 aa).

Residue Glu-349 is the Proton donor of the active site. Catalysis depends on residues His-380 and Lys-508.

The protein belongs to the GPI family.

The protein localises to the cytoplasm. The enzyme catalyses alpha-D-glucose 6-phosphate = beta-D-fructose 6-phosphate. It functions in the pathway carbohydrate biosynthesis; gluconeogenesis. It participates in carbohydrate degradation; glycolysis; D-glyceraldehyde 3-phosphate and glycerone phosphate from D-glucose: step 2/4. Catalyzes the reversible isomerization of glucose-6-phosphate to fructose-6-phosphate. The sequence is that of Glucose-6-phosphate isomerase from Caulobacter sp. (strain K31).